Consider the following 752-residue polypeptide: Multifunctional tryptophan biosynthesis protein (752 aa).

Residues 3–202 (FTLLIDNYDS…IQMKGGKWGG (200 aa)) enclose the Glutamine amidotransferase type-1 domain. Residue 58 to 60 (GPG) participates in L-glutamine binding. The active-site Nucleophile; for GATase activity is cysteine 86. Residue 136–137 (SL) coordinates L-glutamine. Residues histidine 176 and glutamate 178 each act as for GATase activity in the active site. Positions 231-495 (ILNRIHAQRL…DTKAFLRSLI (265 aa)) are indole-3-glycerol phosphate synthase. Residues 509-752 (LVKICGIRST…VEAFVKAVRG (244 aa)) are N-(5'-phosphoribosyl)anthranilate isomerase.

It catalyses the reaction N-(5-phospho-beta-D-ribosyl)anthranilate = 1-(2-carboxyphenylamino)-1-deoxy-D-ribulose 5-phosphate. The enzyme catalyses 1-(2-carboxyphenylamino)-1-deoxy-D-ribulose 5-phosphate + H(+) = (1S,2R)-1-C-(indol-3-yl)glycerol 3-phosphate + CO2 + H2O. The catalysed reaction is chorismate + L-glutamine = anthranilate + pyruvate + L-glutamate + H(+). Its pathway is amino-acid biosynthesis; L-tryptophan biosynthesis; L-tryptophan from chorismate: step 1/5. It participates in amino-acid biosynthesis; L-tryptophan biosynthesis; L-tryptophan from chorismate: step 3/5. The protein operates within amino-acid biosynthesis; L-tryptophan biosynthesis; L-tryptophan from chorismate: step 4/5. Trifunctional enzyme bearing the Gln amidotransferase (GATase) domain of anthranilate synthase, indole-glycerolphosphate synthase, and phosphoribosylanthranilate isomerase activities. The sequence is that of Multifunctional tryptophan biosynthesis protein (TRP1) from Cryptococcus neoformans var. neoformans serotype D (strain B-3501A) (Filobasidiella neoformans).